Reading from the N-terminus, the 348-residue chain is Eukaryotic translation initiation factor 3 subunit I (348 aa).

6 WD repeats span residues 8–49 (GHER…GTFE), 51–91 (HMGT…YTYE), 93–135 (PTPV…PKNQ), 147–186 (DGAKKVTIAGWSAGGKYIIAGHEDGLVSKYDGATGEFIDS), 196–238 (EKIH…KVYK), and 294–333 (GHFGPLNTIAVHPDGTGYASGGEDGFIRLHSFDKSYYDFE).

This sequence belongs to the eIF-3 subunit I family. As to quaternary structure, component of the eukaryotic translation initiation factor 3 (eIF-3) complex.

Its subcellular location is the cytoplasm. Functionally, component of the eukaryotic translation initiation factor 3 (eIF-3) complex, which is involved in protein synthesis of a specialized repertoire of mRNAs and, together with other initiation factors, stimulates binding of mRNA and methionyl-tRNAi to the 40S ribosome. The eIF-3 complex specifically targets and initiates translation of a subset of mRNAs involved in cell proliferation. The sequence is that of Eukaryotic translation initiation factor 3 subunit I from Meyerozyma guilliermondii (strain ATCC 6260 / CBS 566 / DSM 6381 / JCM 1539 / NBRC 10279 / NRRL Y-324) (Yeast).